Reading from the N-terminus, the 377-residue chain is Adaptive-response sensory kinase SasA (377 aa).

Positions 154-373 (MLVHDLRSPL…SFHFTLPVYR (220 aa)) constitute a Histidine kinase domain. Position 157 is a phosphohistidine; by autocatalysis (His157).

In terms of assembly, homooligomerizes. Interacts with KaiC. Participates in the KaiABC clock complex, whose core is composed of a KaiC homohexamer, 6 KaiB and up to 6 KaiA dimers. SasA and KaiB(fs) compete to bind to KaiC.

It catalyses the reaction ATP + protein L-histidine = ADP + protein N-phospho-L-histidine.. Its function is as follows. Member of the two-component regulatory system SasA/RpaA involved in genome-wide circadian gene expression. One of several clock output pathways. Participates in the Kai clock protein complex, the main circadian regulator in cyanobacteria, via its interaction with KaiC. KaiC enhances the autophosphorylation activity of SasA, which then transfers its phosphate group to RpaA to activate it. In addition to its output function, recruits fold-shifted KaiB (KaiB(fs)) to KaiC to cooperatively form the KaiB(6):KaiC(6) complex (independent of SasA kinase activity). Required for robustness of the circadian rhythm of gene expression and is involved in clock output, also required for adaptation to light/dark cycles. This is Adaptive-response sensory kinase SasA from Synechococcus sp. (strain JA-3-3Ab) (Cyanobacteria bacterium Yellowstone A-Prime).